Here is a 545-residue protein sequence, read N- to C-terminus: Tyrosine decarboxylase 2 (545 aa).

Residues 23–44 (GYTNGNGHTNGNGNYNGNGHVN) show a composition bias toward gly residues. Residues 23-45 (GYTNGNGHTNGNGNYNGNGHVNG) form a disordered region. L-tyrosine is bound by residues His245 and His360. Residue Lys361 is modified to N6-(pyridoxal phosphate)lysine. Residue Tyr390 participates in L-tyrosine binding.

Belongs to the group II decarboxylase family. Homotetramer. It depends on pyridoxal 5'-phosphate as a cofactor. Expressed specifically in flowers.

Its subcellular location is the cytoplasm. It catalyses the reaction L-tyrosine + H(+) = tyramine + CO2. Converts tyrosine into tyramine, a precursor of isoquinoline alkaloids and various amides. The protein is Tyrosine decarboxylase 2 of Arabidopsis thaliana (Mouse-ear cress).